Consider the following 228-residue polypeptide: Lipoprotein-releasing system ATP-binding protein LolD 2 (228 aa).

In terms of domain architecture, ABC transporter spans 9–228 (RGLERVYKTE…KDGHLELQRV (220 aa)). 42 to 49 (GPSGSGKS) is a binding site for ATP.

This sequence belongs to the ABC transporter superfamily. Lipoprotein translocase (TC 3.A.1.125) family. In terms of assembly, the complex is composed of two ATP-binding proteins (LolD) and two transmembrane proteins (LolC and LolE).

Its subcellular location is the cell inner membrane. In terms of biological role, part of the ABC transporter complex LolCDE involved in the translocation of mature outer membrane-directed lipoproteins, from the inner membrane to the periplasmic chaperone, LolA. Responsible for the formation of the LolA-lipoprotein complex in an ATP-dependent manner. The sequence is that of Lipoprotein-releasing system ATP-binding protein LolD 2 from Caulobacter vibrioides (strain ATCC 19089 / CIP 103742 / CB 15) (Caulobacter crescentus).